Reading from the N-terminus, the 344-residue chain is Holliday junction branch migration complex subunit RuvB (344 aa).

The large ATPase domain (RuvB-L) stretch occupies residues methionine 1 to tyrosine 185. ATP contacts are provided by residues leucine 24, arginine 25, glycine 66, lysine 69, threonine 70, serine 71, glutamate 132–phenylalanine 134, arginine 175, tyrosine 185, and arginine 222. Threonine 70 is a Mg(2+) binding site. A small ATPAse domain (RuvB-S) region spans residues glutamate 186–aspartate 256. A head domain (RuvB-H) region spans residues glutamate 259–glutamate 344. Residues arginine 314 and arginine 319 each coordinate DNA.

The protein belongs to the RuvB family. In terms of assembly, homohexamer. Forms an RuvA(8)-RuvB(12)-Holliday junction (HJ) complex. HJ DNA is sandwiched between 2 RuvA tetramers; dsDNA enters through RuvA and exits via RuvB. An RuvB hexamer assembles on each DNA strand where it exits the tetramer. Each RuvB hexamer is contacted by two RuvA subunits (via domain III) on 2 adjacent RuvB subunits; this complex drives branch migration. In the full resolvosome a probable DNA-RuvA(4)-RuvB(12)-RuvC(2) complex forms which resolves the HJ.

It localises to the cytoplasm. It carries out the reaction ATP + H2O = ADP + phosphate + H(+). The RuvA-RuvB-RuvC complex processes Holliday junction (HJ) DNA during genetic recombination and DNA repair, while the RuvA-RuvB complex plays an important role in the rescue of blocked DNA replication forks via replication fork reversal (RFR). RuvA specifically binds to HJ cruciform DNA, conferring on it an open structure. The RuvB hexamer acts as an ATP-dependent pump, pulling dsDNA into and through the RuvAB complex. RuvB forms 2 homohexamers on either side of HJ DNA bound by 1 or 2 RuvA tetramers; 4 subunits per hexamer contact DNA at a time. Coordinated motions by a converter formed by DNA-disengaged RuvB subunits stimulates ATP hydrolysis and nucleotide exchange. Immobilization of the converter enables RuvB to convert the ATP-contained energy into a lever motion, pulling 2 nucleotides of DNA out of the RuvA tetramer per ATP hydrolyzed, thus driving DNA branch migration. The RuvB motors rotate together with the DNA substrate, which together with the progressing nucleotide cycle form the mechanistic basis for DNA recombination by continuous HJ branch migration. Branch migration allows RuvC to scan DNA until it finds its consensus sequence, where it cleaves and resolves cruciform DNA. The protein is Holliday junction branch migration complex subunit RuvB of Mycobacterium tuberculosis (strain ATCC 25177 / H37Ra).